A 249-amino-acid chain; its full sequence is 5'-nucleotidase SurE (249 aa).

4 residues coordinate a divalent metal cation: aspartate 8, aspartate 9, serine 39, and asparagine 91.

It belongs to the SurE nucleotidase family. A divalent metal cation serves as cofactor.

It localises to the cytoplasm. The catalysed reaction is a ribonucleoside 5'-phosphate + H2O = a ribonucleoside + phosphate. Its function is as follows. Nucleotidase that shows phosphatase activity on nucleoside 5'-monophosphates. This Pseudomonas fluorescens (strain Pf0-1) protein is 5'-nucleotidase SurE.